A 454-amino-acid chain; its full sequence is Phosphoglucosamine mutase (454 aa).

Ser104 (phosphoserine intermediate) is an active-site residue. Ser104, Asp244, Asp246, and Asp248 together coordinate Mg(2+). Ser104 carries the post-translational modification Phosphoserine.

This sequence belongs to the phosphohexose mutase family. Mg(2+) serves as cofactor. Post-translationally, activated by phosphorylation.

The enzyme catalyses alpha-D-glucosamine 1-phosphate = D-glucosamine 6-phosphate. Its function is as follows. Catalyzes the conversion of glucosamine-6-phosphate to glucosamine-1-phosphate. In Lacticaseibacillus paracasei (strain ATCC 334 / BCRC 17002 / CCUG 31169 / CIP 107868 / KCTC 3260 / NRRL B-441) (Lactobacillus paracasei), this protein is Phosphoglucosamine mutase.